A 71-amino-acid polypeptide reads, in one-letter code: Small ribosomal subunit protein bS21 (71 aa).

Belongs to the bacterial ribosomal protein bS21 family.

The polypeptide is Small ribosomal subunit protein bS21 (Photobacterium profundum (strain SS9)).